A 146-amino-acid polypeptide reads, in one-letter code: Snake venom vascular endothelial growth factor toxin (146 aa).

Positions 1-24 are cleaved as a signal peptide; the sequence is MAAYLLAVAILFCIQGWPLGTVQG. Pyrrolidone carboxylic acid is present on Q25. Intrachain disulfides connect C38–C80, C69–C115, and C73–C117. A disordered region spans residues 118–146; that stretch reads RPRSASGVNSRKHKRNPEEGEQRAKFPFV. Residues 133–146 show a composition bias toward basic and acidic residues; sequence NPEEGEQRAKFPFV.

The protein belongs to the PDGF/VEGF growth factor family. Snake venom VEGF subfamily. In terms of assembly, homodimer; disulfide-linked. Interacts with VEGF receptor-1 (FLT1) with a high affinity, whereas it binds to VEGF receptor-2 (KDR) with a low affinity. Does not bind VEGF receptor-3 (FLT4). In terms of tissue distribution, expressed by the venom gland.

Its subcellular location is the secreted. Its function is as follows. Snake venom VEGFs that may contribute to venom dispersion and prey subjugation by inducing vascular permeability and hypotension. This protein induces an increase in capillary permeability after intradermal injection, as well as a drastic hypotensive effect after intravenous injection. The hypotension is mediated by nitric oxide (NO), which is produced by VEGF-activated endothelium NO synthase. Also induces angiogenesis in vitro. Like other crotalid VEGFs, this protein interacts with VEGF receptor-1 (FLT1) with a high affinity, whereas it binds to VEGF receptor-2 (KDR) with a low affinity. This Bothrops erythromelas (Caatinga lance head) protein is Snake venom vascular endothelial growth factor toxin.